A 732-amino-acid chain; its full sequence is MGRREEMIAKIKELMLQPERIRNIGIAAHIDHGKTTLSDNLLAGAGMISEELAGKQLVLDFDEQEQARGITINAANVSMVHNYEGKDYLINLIDTPGHVDFGGDVTRAMRAIDGVIIVVDAVEGVMPQTETVVRQALREYVKPVLFINKVDRLIRELKLTPQQMMERFSKIIMDVNRLIQRYAPEEYKKQWMVKVEDGSVAFGSAYYNWALSVPFMKRTGVKFNEIIDLTLKGDHKTLRQKAPLHVVVLDMVVKHLPNPIEAQKYRIPHLWQGDINSDVGQAMLNCDPKGKMVMVVTKIIIDKHAGEVATGRVWSGTVKSGQEVYLINTKRKARIQQVGIYMGPERINMEAVPAGNIVAVTGLRDAMAGETVAEEPIEPFEALHYVSEPVVTVAIEAKNVKDLPRLIEALRQLAKEDPTLHVKIDEETGQHLLSGMGELHLEVKLYKLKKDWGIDIDVSEPIVVYRESITKPSPMVEGKSPNRHNRFYIVVEPMPDEIYNAIKEGIIPEGRIKNPKEVAKKLAELGMDYEIARGIVDVYNGNMFLDNTKGVQYLNEVMDLLIDGFHQAMDEGPLAKEPVMKVIVRLIDAQVHEDNVHRGPAQIYPAIRTAIHCAMMKSNPVLYEPYQKVIINIPYEYMGAVSREITQRRGQLVDMKQEGEVMTIIAEAPVAEMFGFAGAIRSATSGRALWSTEHAGFKRVPNELAQQIIRQIRQRKGLDPNPPTEKDVCPLF.

Positions 19–260 (ERIRNIGIAA…MVVKHLPNPI (242 aa)) constitute a tr-type G domain. Residues 28–35 (AHIDHGKT), 94–98 (DTPGH), and 148–151 (NKVD) each bind GTP. Histidine 597 is subject to Diphthamide.

This sequence belongs to the TRAFAC class translation factor GTPase superfamily. Classic translation factor GTPase family. EF-G/EF-2 subfamily.

It is found in the cytoplasm. Functionally, catalyzes the GTP-dependent ribosomal translocation step during translation elongation. During this step, the ribosome changes from the pre-translocational (PRE) to the post-translocational (POST) state as the newly formed A-site-bound peptidyl-tRNA and P-site-bound deacylated tRNA move to the P and E sites, respectively. Catalyzes the coordinated movement of the two tRNA molecules, the mRNA and conformational changes in the ribosome. The protein is Elongation factor 2 (fusA) of Pyrococcus abyssi (strain GE5 / Orsay).